A 38-amino-acid chain; its full sequence is Large ribosomal subunit protein bL36 (38 aa).

This sequence belongs to the bacterial ribosomal protein bL36 family.

This chain is Large ribosomal subunit protein bL36, found in Stutzerimonas stutzeri (strain A1501) (Pseudomonas stutzeri).